Consider the following 80-residue polypeptide: UPF0291 protein LCA_1274 (80 aa).

Residues 59 to 80 (EGKEVTPEKVKDIQREKGLRDD) are disordered.

Belongs to the UPF0291 family.

It is found in the cytoplasm. This chain is UPF0291 protein LCA_1274, found in Latilactobacillus sakei subsp. sakei (strain 23K) (Lactobacillus sakei subsp. sakei).